We begin with the raw amino-acid sequence, 472 residues long: Siroheme synthase 2 (472 aa).

Residues 1–204 form a precorrin-2 dehydrogenase /sirohydrochlorin ferrochelatase region; sequence MDYFPIFCQL…EDQVQVEQHV (204 aa). Residues 22 to 23 and 43 to 44 contribute to the NAD(+) site; these read EV and CE. Serine 128 carries the post-translational modification Phosphoserine. The interval 216-472 is uroporphyrinogen-III C-methyltransferase; the sequence is GEVVLVGAGP…GMKEQVERVG (257 aa). Position 225 (proline 225) interacts with S-adenosyl-L-methionine. Catalysis depends on aspartate 248, which acts as the Proton acceptor. The active-site Proton donor is lysine 270. Residues 301–303, isoleucine 306, 331–332, methionine 382, and glycine 411 each bind S-adenosyl-L-methionine; these read GGD and TA.

It in the N-terminal section; belongs to the precorrin-2 dehydrogenase / sirohydrochlorin ferrochelatase family. In the C-terminal section; belongs to the precorrin methyltransferase family.

The catalysed reaction is uroporphyrinogen III + 2 S-adenosyl-L-methionine = precorrin-2 + 2 S-adenosyl-L-homocysteine + H(+). It catalyses the reaction precorrin-2 + NAD(+) = sirohydrochlorin + NADH + 2 H(+). The enzyme catalyses siroheme + 2 H(+) = sirohydrochlorin + Fe(2+). It functions in the pathway cofactor biosynthesis; adenosylcobalamin biosynthesis; precorrin-2 from uroporphyrinogen III: step 1/1. Its pathway is cofactor biosynthesis; adenosylcobalamin biosynthesis; sirohydrochlorin from precorrin-2: step 1/1. The protein operates within porphyrin-containing compound metabolism; siroheme biosynthesis; precorrin-2 from uroporphyrinogen III: step 1/1. It participates in porphyrin-containing compound metabolism; siroheme biosynthesis; siroheme from sirohydrochlorin: step 1/1. It functions in the pathway porphyrin-containing compound metabolism; siroheme biosynthesis; sirohydrochlorin from precorrin-2: step 1/1. Its function is as follows. Multifunctional enzyme that catalyzes the SAM-dependent methylations of uroporphyrinogen III at position C-2 and C-7 to form precorrin-2 via precorrin-1. Then it catalyzes the NAD-dependent ring dehydrogenation of precorrin-2 to yield sirohydrochlorin. Finally, it catalyzes the ferrochelation of sirohydrochlorin to yield siroheme. The sequence is that of Siroheme synthase 2 from Yersinia enterocolitica serotype O:8 / biotype 1B (strain NCTC 13174 / 8081).